We begin with the raw amino-acid sequence, 588 residues long: Sulfite reductase [NADPH] hemoprotein beta-component (588 aa).

Residues cysteine 442, cysteine 448, cysteine 487, and cysteine 491 each coordinate [4Fe-4S] cluster. Cysteine 491 serves as a coordination point for siroheme.

Belongs to the nitrite and sulfite reductase 4Fe-4S domain family. As to quaternary structure, alpha(8)-beta(8). The alpha component is a flavoprotein, the beta component is a hemoprotein. The cofactor is siroheme. [4Fe-4S] cluster is required as a cofactor.

The catalysed reaction is hydrogen sulfide + 3 NADP(+) + 3 H2O = sulfite + 3 NADPH + 4 H(+). It participates in sulfur metabolism; hydrogen sulfide biosynthesis; hydrogen sulfide from sulfite (NADPH route): step 1/1. Its function is as follows. Component of the sulfite reductase complex that catalyzes the 6-electron reduction of sulfite to sulfide. This is one of several activities required for the biosynthesis of L-cysteine from sulfate. The polypeptide is Sulfite reductase [NADPH] hemoprotein beta-component (Actinobacillus pleuropneumoniae serotype 3 (strain JL03)).